Reading from the N-terminus, the 148-residue chain is Arginine repressor (148 aa).

The protein belongs to the ArgR family.

The protein localises to the cytoplasm. It participates in amino-acid biosynthesis; L-arginine biosynthesis [regulation]. Functionally, regulates arginine biosynthesis genes. The chain is Arginine repressor from Chlorobium phaeovibrioides (strain DSM 265 / 1930) (Prosthecochloris vibrioformis (strain DSM 265)).